Here is a 268-residue protein sequence, read N- to C-terminus: Ribosomal RNA small subunit methyltransferase A (268 aa).

Residues Asn18, Leu20, Gly45, Glu66, Asp91, and Asn112 each contribute to the S-adenosyl-L-methionine site.

This sequence belongs to the class I-like SAM-binding methyltransferase superfamily. rRNA adenine N(6)-methyltransferase family. RsmA subfamily.

The protein localises to the cytoplasm. It carries out the reaction adenosine(1518)/adenosine(1519) in 16S rRNA + 4 S-adenosyl-L-methionine = N(6)-dimethyladenosine(1518)/N(6)-dimethyladenosine(1519) in 16S rRNA + 4 S-adenosyl-L-homocysteine + 4 H(+). Functionally, specifically dimethylates two adjacent adenosines (A1518 and A1519) in the loop of a conserved hairpin near the 3'-end of 16S rRNA in the 30S particle. May play a critical role in biogenesis of 30S subunits. In Shewanella sp. (strain MR-7), this protein is Ribosomal RNA small subunit methyltransferase A.